We begin with the raw amino-acid sequence, 372 residues long: N-methyl-L-tryptophan oxidase (372 aa).

FAD is bound at residue 4-34 (DLIIIGSGSVGAAAGYYATRAGLKVLMTDAH). Cys307 carries the S-8alpha-FAD cysteine modification.

The protein belongs to the MSOX/MTOX family. MTOX subfamily. As to quaternary structure, monomer. Requires FAD as cofactor.

It carries out the reaction N(alpha)-methyl-L-tryptophan + O2 + H2O = L-tryptophan + formaldehyde + H2O2. Catalyzes the oxidative demethylation of N-methyl-L-tryptophan. The sequence is that of N-methyl-L-tryptophan oxidase from Citrobacter koseri (strain ATCC BAA-895 / CDC 4225-83 / SGSC4696).